The chain runs to 417 residues: Neuropeptide FF receptor 2 (417 aa).

The Extracellular segment spans residues 1–45; sequence MGKRWDSNSSGSWDHIWSGNDTQHPWYSDINITYMNYYLHQPHVT. 3 N-linked (GlcNAc...) asparagine glycosylation sites follow: Asn8, Asn20, and Asn31. A helical transmembrane segment spans residues 46-66; sequence AVFISSYFLIFFLCMVGNTVV. The Cytoplasmic segment spans residues 67–82; sequence CFVVIRNRYMHTVTNF. A helical transmembrane segment spans residues 83-103; that stretch reads FIFNLAISDLLVGIFCMPITL. The Extracellular segment spans residues 104-119; that stretch reads LDNIIAGWPFGSSMCK. A disulfide bond links Cys118 and Cys206. The helical transmembrane segment at 120-140 threads the bilayer; sequence ISGLVQGISVAASVFTLVAIA. The Cytoplasmic portion of the chain corresponds to 141–160; sequence VDRFRCVVYPFKPKLTVKTA. The chain crosses the membrane as a helical span at residues 161-181; that stretch reads FVMIVIIWGLAITIMTPSAIM. The Extracellular portion of the chain corresponds to 182 to 217; the sequence is LHVQEEKYYRVRLSSHNKTSTVYWCREDWPNQEMRR. N-linked (GlcNAc...) asparagine glycosylation is present at Asn198. The helical transmembrane segment at 218–238 threads the bilayer; sequence IYTTVLFATIYLAPLSLIVIM. Residues 239–274 are Cytoplasmic-facing; sequence YARIGASLFKTSAHSTGKQRLEQWHVSKKKQKVIKM. The helical transmembrane segment at 275–295 threads the bilayer; the sequence is LLTVALLFILSWLPLWTLMML. The Extracellular portion of the chain corresponds to 296–310; sequence SDYADLSPNKLRVIN. Residues 311 to 331 traverse the membrane as a helical segment; the sequence is IYVYPFAHWLAFCNSSVNPII. Over 332-417 the chain is Cytoplasmic; it reads YGFFNENFRS…TGEATNSTET (86 aa). The interval 378-417 is disordered; it reads HEPASQNPSGENLGCRKSADNPTQESLMEETGEATNSTET.

The protein belongs to the G-protein coupled receptor 1 family.

The protein localises to the cell membrane. Receptor for NPAF (A-18-F-amide) and NPFF (F-8-F-amide) neuropeptides, also known as morphine-modulating peptides. Can also be activated by a variety of naturally occurring or synthetic FMRF-amide like ligands. This receptor mediates its action by association with G proteins that activate a phosphatidylinositol-calcium second messenger system. This Rattus norvegicus (Rat) protein is Neuropeptide FF receptor 2 (Npffr2).